A 588-amino-acid chain; its full sequence is MNATQEQLKIKLEQALVAAFGDEYAGVDPILVSASNPKFGDYQANVALSLSKKLGQQPRAIASAIVEKLDVSEICEKPEIAGPGFINLKLKTAYLEAQLNTIQADTRLGVPTAKHPQREIVDFSSPNIAKEMHVGHLRSTIIGDSIARILEFRGHDVLRLNHVGDWGTQFGMLITYLREVSPEALTTANALDIGDLVSFYRQAKQRFDADEAFQETARQEVVRLQAGAADTLHAWKLLCEQSRQEFQVIYDLLDVKLTERGESFYNPLLPTVVENLEKSGLLVENQGAKCVFLDGFTNREGEPLPLIVQKSDGGYNYATTDLAALRYRIQKDEAKRIIYITDAGQANHFAQFFQVARKAGWIPDDVELVHVPFGLVLGEDGKKFKTRSGDTVRLRDLLDEAISRAHADVEVRLKAEEREETAEFIDKVAEVVGISAVKYADLSQNRTSNYIFSYDKMLDLKGNTAPYMLYAYARIQGISRKGEINFADLGDNAKVILQHETEFALAKYLLQLGEVISTVEEDLSPNRLCEYLYELSKRFNAFYDRNQGVQVLSAEEPLRTSRLVLCDLTARTLKLGLSLLGIQVLERM.

A 'HIGH' region motif is present at residues 126-136 (PNIAKEMHVGH).

Belongs to the class-I aminoacyl-tRNA synthetase family. Monomer.

It is found in the cytoplasm. The enzyme catalyses tRNA(Arg) + L-arginine + ATP = L-arginyl-tRNA(Arg) + AMP + diphosphate. This chain is Arginine--tRNA ligase, found in Nostoc sp. (strain PCC 7120 / SAG 25.82 / UTEX 2576).